A 184-amino-acid polypeptide reads, in one-letter code: Peptide deformylase (184 aa).

Fe cation is bound by residues C111 and H154. E155 is a catalytic residue. H158 is a binding site for Fe cation.

The protein belongs to the polypeptide deformylase family. Requires Fe(2+) as cofactor.

It carries out the reaction N-terminal N-formyl-L-methionyl-[peptide] + H2O = N-terminal L-methionyl-[peptide] + formate. In terms of biological role, removes the formyl group from the N-terminal Met of newly synthesized proteins. Requires at least a dipeptide for an efficient rate of reaction. N-terminal L-methionine is a prerequisite for activity but the enzyme has broad specificity at other positions. In Lactobacillus delbrueckii subsp. bulgaricus (strain ATCC 11842 / DSM 20081 / BCRC 10696 / JCM 1002 / NBRC 13953 / NCIMB 11778 / NCTC 12712 / WDCM 00102 / Lb 14), this protein is Peptide deformylase.